The primary structure comprises 834 residues: Periplasmic nitrate reductase (834 aa).

Residues 1 to 29 constitute a signal peptide (tat-type signal); that stretch reads MNLTRREFAKANAAAIAAAAAGLPILVRA. In terms of domain architecture, 4Fe-4S Mo/W bis-MGD-type spans 41 to 97; the sequence is LDWNKAPCRFCGTGCSVMVATRDGQVVATHGDIKAEVNRGINCVKGYFLSKIMYGSD. Residues Cys48, Cys51, Cys55, and Cys83 each contribute to the [4Fe-4S] cluster site. Residues Lys85, Gln152, Asn177, Cys181, 214–221, 245–249, 264–266, Met375, Gln379, Asn485, 511–512, Lys534, Asp561, and 721–730 each bind Mo-bis(molybdopterin guanine dinucleotide); these read WGSNMAEM, STFEH, QTD, SD, and TGRVLEHWHT. Position 797 (Phe797) interacts with substrate. Positions 805 and 822 each coordinate Mo-bis(molybdopterin guanine dinucleotide).

The protein belongs to the prokaryotic molybdopterin-containing oxidoreductase family. NasA/NapA/NarB subfamily. In terms of assembly, component of the periplasmic nitrate reductase NapAB complex composed of NapA and NapB. The cofactor is [4Fe-4S] cluster. Mo-bis(molybdopterin guanine dinucleotide) is required as a cofactor. Post-translationally, predicted to be exported by the Tat system. The position of the signal peptide cleavage has not been experimentally proven.

It localises to the periplasm. The catalysed reaction is 2 Fe(II)-[cytochrome] + nitrate + 2 H(+) = 2 Fe(III)-[cytochrome] + nitrite + H2O. Catalytic subunit of the periplasmic nitrate reductase complex NapAB. Receives electrons from NapB and catalyzes the reduction of nitrate to nitrite. The sequence is that of Periplasmic nitrate reductase from Pseudomonas paraeruginosa (strain DSM 24068 / PA7) (Pseudomonas aeruginosa (strain PA7)).